Here is a 156-residue protein sequence, read N- to C-terminus: Small ribosomal subunit protein uS7 (156 aa).

This sequence belongs to the universal ribosomal protein uS7 family. In terms of assembly, part of the 30S ribosomal subunit. Contacts proteins S9 and S11.

Its function is as follows. One of the primary rRNA binding proteins, it binds directly to 16S rRNA where it nucleates assembly of the head domain of the 30S subunit. Is located at the subunit interface close to the decoding center, probably blocks exit of the E-site tRNA. This chain is Small ribosomal subunit protein uS7, found in Mycobacterium leprae (strain TN).